Consider the following 445-residue polypeptide: Histidinol dehydrogenase (445 aa).

NAD(+) is bound by residues Tyr-134, Gln-198, and Asn-226. The substrate site is built by Thr-249, Gln-271, and His-274. Residues Gln-271 and His-274 each contribute to the Zn(2+) site. Active-site proton acceptor residues include Glu-340 and His-341. Substrate is bound by residues His-341, Asp-374, Glu-428, and His-433. Position 374 (Asp-374) interacts with Zn(2+). Position 433 (His-433) interacts with Zn(2+).

This sequence belongs to the histidinol dehydrogenase family. Zn(2+) serves as cofactor.

It catalyses the reaction L-histidinol + 2 NAD(+) + H2O = L-histidine + 2 NADH + 3 H(+). It participates in amino-acid biosynthesis; L-histidine biosynthesis; L-histidine from 5-phospho-alpha-D-ribose 1-diphosphate: step 9/9. In terms of biological role, catalyzes the sequential NAD-dependent oxidations of L-histidinol to L-histidinaldehyde and then to L-histidine. The protein is Histidinol dehydrogenase of Nocardia farcinica (strain IFM 10152).